A 520-amino-acid polypeptide reads, in one-letter code: NAD(P)H-quinone oxidoreductase subunit 2 (520 aa).

The next 14 helical transmembrane spans lie at 26 to 46 (AVLP…VDLA), 54 to 74 (WSPP…AMQW), 91 to 111 (LAIA…LISW), 120 to 140 (PIGE…LLCG), 144 to 164 (LVSV…LSGY), 179 to 199 (LLVG…LYGI), 220 to 240 (SALA…AVPF), 252 to 272 (PTPV…ALAI), 288 to 308 (LLFT…ALAQ), 314 to 334 (MLAY…VCGT), 342 to 362 (VLYM…IILF), 386 to 406 (LGLS…GFFG), 421 to 441 (LLVT…ISVI), and 474 to 494 (VALI…NPLF).

The protein belongs to the complex I subunit 2 family. NDH-1 can be composed of about 15 different subunits; different subcomplexes with different compositions have been identified which probably have different functions.

The protein localises to the cellular thylakoid membrane. It catalyses the reaction a plastoquinone + NADH + (n+1) H(+)(in) = a plastoquinol + NAD(+) + n H(+)(out). It carries out the reaction a plastoquinone + NADPH + (n+1) H(+)(in) = a plastoquinol + NADP(+) + n H(+)(out). NDH-1 shuttles electrons from an unknown electron donor, via FMN and iron-sulfur (Fe-S) centers, to quinones in the respiratory and/or the photosynthetic chain. The immediate electron acceptor for the enzyme in this species is believed to be plastoquinone. Couples the redox reaction to proton translocation, and thus conserves the redox energy in a proton gradient. Cyanobacterial NDH-1 also plays a role in inorganic carbon-concentration. The protein is NAD(P)H-quinone oxidoreductase subunit 2 of Prochlorococcus marinus (strain NATL2A).